Here is a 71-residue protein sequence, read N- to C-terminus: Protein Tlp homolog (71 aa).

The segment at 30–56 (ETLQNNSLSRDQRQAIMEKNKRREESI) is disordered. Over residues 39-56 (RDQRQAIMEKNKRREESI) the composition is skewed to basic and acidic residues.

Belongs to the Tlp family.

The polypeptide is Protein Tlp homolog (Desulforamulus reducens (strain ATCC BAA-1160 / DSM 100696 / MI-1) (Desulfotomaculum reducens)).